We begin with the raw amino-acid sequence, 188 residues long: Gamma-glutamylcyclotransferase (188 aa).

19-24 (YFAYGS) is a binding site for substrate. Glu-98 functions as the Proton acceptor in the catalytic mechanism. Residue Tyr-139 coordinates substrate. Ser-173 carries the phosphoserine modification.

It belongs to the gamma-glutamylcyclotransferase family. As to quaternary structure, homodimer.

It catalyses the reaction an alpha-(gamma-L-glutamyl)-L-amino acid = 5-oxo-L-proline + an L-alpha-amino acid. In terms of biological role, catalyzes the formation of 5-oxoproline from gamma-glutamyl dipeptides and may play a significant role in glutathione homeostasis. Induces release of cytochrome c from mitochondria with resultant induction of apoptosis. The polypeptide is Gamma-glutamylcyclotransferase (Homo sapiens (Human)).